Consider the following 218-residue polypeptide: Adenylate kinase (218 aa).

Position 10 to 15 (glycine 10 to threonine 15) interacts with ATP. An NMP region spans residues serine 30–valine 59. Residues threonine 31, arginine 36, glutamine 57–valine 59, glycine 85–arginine 88, and glutamine 92 contribute to the AMP site. Residues glycine 122–aspartate 159 are LID. ATP-binding positions include arginine 123 and serine 132–tyrosine 133. 2 residues coordinate AMP: arginine 156 and arginine 167. Residue glycine 203 participates in ATP binding.

This sequence belongs to the adenylate kinase family. In terms of assembly, monomer.

It is found in the cytoplasm. The enzyme catalyses AMP + ATP = 2 ADP. It functions in the pathway purine metabolism; AMP biosynthesis via salvage pathway; AMP from ADP: step 1/1. Functionally, catalyzes the reversible transfer of the terminal phosphate group between ATP and AMP. Plays an important role in cellular energy homeostasis and in adenine nucleotide metabolism. This chain is Adenylate kinase, found in Chlorobium chlorochromatii (strain CaD3).